Here is a 504-residue protein sequence, read N- to C-terminus: ATP synthase subunit alpha, chloroplastic (504 aa).

170–177 (GDRQTGKT) is an ATP binding site.

This sequence belongs to the ATPase alpha/beta chains family. In terms of assembly, F-type ATPases have 2 components, CF(1) - the catalytic core - and CF(0) - the membrane proton channel. CF(1) has five subunits: alpha(3), beta(3), gamma(1), delta(1), epsilon(1). CF(0) has four main subunits: a, b, b' and c.

It is found in the plastid. The protein resides in the chloroplast thylakoid membrane. It carries out the reaction ATP + H2O + 4 H(+)(in) = ADP + phosphate + 5 H(+)(out). In terms of biological role, produces ATP from ADP in the presence of a proton gradient across the membrane. The alpha chain is a regulatory subunit. This chain is ATP synthase subunit alpha, chloroplastic, found in Pyropia yezoensis (Susabi-nori).